A 159-amino-acid chain; its full sequence is Na(+)/H(+) antiporter subunit E1 (159 aa).

The next 4 helical transmembrane spans lie at M1 to S21, F27 to G47, L60 to L80, and W101 to I121.

The protein belongs to the CPA3 antiporters (TC 2.A.63) subunit E family. May form a heterooligomeric complex that consists of seven subunits: mnhA1, mnhB1, mnhC1, mnhD1, mnhE1, mnhF1 and mnhG1.

It is found in the cell membrane. Functionally, mnh complex is a Na(+)/H(+) antiporter involved in Na(+) excretion. The polypeptide is Na(+)/H(+) antiporter subunit E1 (mnhE1) (Staphylococcus epidermidis (strain ATCC 35984 / DSM 28319 / BCRC 17069 / CCUG 31568 / BM 3577 / RP62A)).